The following is a 188-amino-acid chain: Oleosin S2-2 (188 aa).

At Ala2 the chain carries N-acetylalanine. The interval Ala2–Ala51 is polar. A run of 3 helical transmembrane segments spans residues Ile49 to Thr69, Val74 to Ala94, and Ile96 to Leu116. The hydrophobic stretch occupies residues Leu52–Tyr125. The interval Asp164 to Thr188 is disordered. Polar residues predominate over residues Thr172 to Pro181.

The protein belongs to the oleosin family.

The protein resides in the lipid droplet. Its subcellular location is the membrane. May have a structural role to stabilize the lipid body during desiccation of the seed by preventing coalescence of the oil. Probably interacts with both lipid and phospholipid moieties of lipid bodies. May also provide recognition signals for specific lipase anchorage in lipolysis during seedling growth. The protein is Oleosin S2-2 (S2) of Brassica napus (Rape).